We begin with the raw amino-acid sequence, 86 residues long: Neuropeptide precursor capa-1 (86 aa).

The N-terminal stretch at 1 to 19 (MLLWIVATLLIFSLPVSTA) is a signal peptide.

As to expression, expressed in two pairs of neurons in the anterior part of the nervous system (at protein level).

Encodes at least three neuropeptides: two of the periviscerokinin family (APHPSSALLVPYPRV-amide and LYMARV-amide) and one pyrokinin (AFFYTPRI-amide). Functionally, putative ligand for neuromedin U receptor homolog nmur-2. The protein is Neuropeptide precursor capa-1 of Caenorhabditis elegans.